Consider the following 156-residue polypeptide: Transcription antitermination protein NusB (156 aa).

The protein belongs to the NusB family.

In terms of biological role, involved in transcription antitermination. Required for transcription of ribosomal RNA (rRNA) genes. Binds specifically to the boxA antiterminator sequence of the ribosomal RNA (rrn) operons. This is Transcription antitermination protein NusB from Clostridium kluyveri (strain ATCC 8527 / DSM 555 / NBRC 12016 / NCIMB 10680 / K1).